The chain runs to 432 residues: EF-hand calcium-binding domain-containing protein 3 (432 aa).

EF-hand domains follow at residues 45–80 (AQLEAFRNAYNFFTKDRTGCIDSHGLMSTVAKLGMN) and 81–116 (LNAYDIYNELKCADRDRDGKINFSDFIDVLTDKKLF). Ca(2+) contacts are provided by Asp94, Asp96, Asp98, Lys100, and Asp105. The residue at position 273 (Tyr273) is a Phosphotyrosine. The interval 394–432 (NVNKTSPSNSGLSSPSDLSESDPETGRKRKRKSSRGFRQ) is disordered. Low complexity predominate over residues 399–411 (SPSNSGLSSPSDL). A compositionally biased stretch (basic residues) spans 420–432 (RKRKRKSSRGFRQ).

The polypeptide is EF-hand calcium-binding domain-containing protein 3 (Efcab3) (Rattus norvegicus (Rat)).